A 236-amino-acid chain; its full sequence is MSIHAGGLQVPVSVIIPAAGSGRRMGGGTAKQFLPLRGEPVLVRTVRRFSECPLVDEIVIAAGDVEATRALVGHMPKVTRIVQGGAERQDSVWAALQAVHSRPRIVAVHDAARPLLTADVLKGVLQAAADHPAQVVAVPVQDTIKQVGPDGVVVATPDRSMLWAVQTPQVFWADVLVRAFRQAIADGFLGTDDASLVERIGVPVRVYRGHPGNLKLTTPTDFRLAELLLEEEARQC.

This sequence belongs to the IspD/TarI cytidylyltransferase family. IspD subfamily.

The catalysed reaction is 2-C-methyl-D-erythritol 4-phosphate + CTP + H(+) = 4-CDP-2-C-methyl-D-erythritol + diphosphate. Its pathway is isoprenoid biosynthesis; isopentenyl diphosphate biosynthesis via DXP pathway; isopentenyl diphosphate from 1-deoxy-D-xylulose 5-phosphate: step 2/6. Catalyzes the formation of 4-diphosphocytidyl-2-C-methyl-D-erythritol from CTP and 2-C-methyl-D-erythritol 4-phosphate (MEP). The polypeptide is 2-C-methyl-D-erythritol 4-phosphate cytidylyltransferase (Symbiobacterium thermophilum (strain DSM 24528 / JCM 14929 / IAM 14863 / T)).